The primary structure comprises 1235 residues: N-acetylglucosamine-1-phosphotransferase subunits alpha/beta (1235 aa).

The helical transmembrane segment at 22–42 (VCFVGVVVTIVSAFQFGEVVL) threads the bilayer. N-linked (GlcNAc...) asparagine glycans are attached at residues Asn83, Asn114, Asn148, and Asn179. 4 disulfides stabilise this stretch: Cys438/Cys461, Cys452/Cys468, Cys505/Cys528, and Cys519/Cys535. 2 LNR repeats span residues 438–473 (CAEG…GNTA) and 505–545 (CNQG…ELYK). Asp449, Asp464, Asp467, Asp516, Asp531, and Asp534 together coordinate Ca(2+). N-linked (GlcNAc...) asparagine glycosylation is found at Asn614 and Asn729. The region spanning 699 to 823 (NISLLPKEAQ…AQPTLGVTVS (125 aa)) is the DMAP1-binding domain. 2 disordered regions span residues 751–783 (QART…HRSE) and 830–850 (LIVP…AEGN). Basic and acidic residues predominate over residues 837-848 (HLPKEEESDRAE). Residues 984–1019 (VQPLNISQVFHEVDTDQSGVLSDREIRTLATRIHDL) form the EF-hand domain. N-linked (GlcNAc...) asparagine glycosylation occurs at Asn988. Residues Asp997, Asp999, Ser1001, and Glu1008 each coordinate Ca(2+). N-linked (GlcNAc...) asparagine glycosylation is present at Asn1108. Residues 1194–1214 (VLATLIIFTIFSFFAEQIIAL) traverse the membrane as a helical segment.

Belongs to the stealth family. In terms of assembly, hexamer of two alpha, two beta and two gamma (GNPTG) subunits; disulfide-linked. The alpha and/or the beta subunits of the enzyme constitute the catalytic subunits. Interacts with LYSET; facilitates proper localization of GNPTAB. The alpha- and beta-subunits are generated by a proteolytic cleavage by MBTPS1 protease at the Lys-907-Asp-908 bond.

It localises to the golgi apparatus membrane. It carries out the reaction N(4)-[alpha-D-mannosyl-(1-&gt;2)-alpha-D-mannosyl-(glycan)]-L-asparaginyl-[protein] + UDP-N-acetyl-alpha-D-glucosamine = N(4)-[6-(N-acetyl-alpha-D-glucosaminyl-1-phospho)-alpha-D-mannosyl-(1-&gt;2)-alpha-D-mannosyl-(glycan)]-L-asparaginyl-[protein] + UMP + H(+). Catalyzes the formation of mannose 6-phosphate (M6P) markers on high mannose type oligosaccharides in the Golgi apparatus. M6P residues are required to bind to the M6P receptors (MPR), which mediate the vesicular transport of lysosomal enzymes to the endosomal/prelysosomal compartment. The protein is N-acetylglucosamine-1-phosphotransferase subunits alpha/beta (Gnptab) of Mus musculus (Mouse).